Consider the following 119-residue polypeptide: MVIDIVTNQFSNLQNIKIFTWKANFESIRINLQHMHLYHYEHIHLFTSSQSYMYHPNARFSYSPFCCFTDTLAYLRCEPYRGYRKCIYRKVKMPNLILRNPLVRYDVSPARYPTIGIRS.

The protein localises to the mitochondrion. It is found in the nucleus. This is an uncharacterized protein from Schizosaccharomyces pombe (strain 972 / ATCC 24843) (Fission yeast).